The primary structure comprises 2809 residues: Fibrillin-3 (2809 aa).

Residues 1 to 31 form the signal peptide; it reads MTLEGLYLARGPLARLLLAWSALLCMAGGQG. Positions 32-48 are excised as a propeptide; that stretch reads RWDGALEAAGPGRVRRR. The 33-residue stretch at 147-179 folds into the EGF-like 1 domain; the sequence is GQPICDRGCHNGGRCIGPNRCACVYGFMGPQCE. 3 disulfide bridges follow: cysteine 151-cysteine 161, cysteine 155-cysteine 167, and cysteine 169-cysteine 178. Residues 185 to 237 form the TB 1 domain; sequence GPCFGQVGPEGCQHQLTGLVCTKALCCATVGRAWGLPCELCPAQPHPCRRGFI. The EGF-like 2; calcium-binding domain occupies 247 to 288; that stretch reads DVDECQAVPGLCQGGSCVNMVGSFHCRCPVGHRLSDSSAACE. 3 disulfides stabilise this stretch: cysteine 251/cysteine 263, cysteine 258/cysteine 272, and cysteine 274/cysteine 287. Residues 293-346 form the TB 2 domain; sequence GACFSVLFGGRCAGDLAGHYTRRQCCCDRGRCWAAGPVPELCPPRGSNEFQQLC. Asparagine 406 carries an N-linked (GlcNAc...) asparagine glycan. Residues 408 to 448 form the EGF-like 3 domain; sequence TIDICRHFTNLCLNGRCLPTPSSYRCECNVGYTQDVRGECI. 15 disulfide bridges follow: cysteine 412/cysteine 424, cysteine 419/cysteine 433, cysteine 435/cysteine 447, cysteine 453/cysteine 463, cysteine 458/cysteine 472, cysteine 474/cysteine 487, cysteine 493/cysteine 505, cysteine 500/cysteine 514, cysteine 516/cysteine 529, cysteine 535/cysteine 546, cysteine 541/cysteine 555, cysteine 557/cysteine 570, cysteine 576/cysteine 587, cysteine 582/cysteine 596, and cysteine 598/cysteine 611. The EGF-like 4; calcium-binding domain maps to 449 to 488; the sequence is DVDECTSSPCHHGDCVNIPGTYHCRCYPGFQATPTRQACV. Residues 489-530 enclose the EGF-like 5; calcium-binding domain; that stretch reads DVDECIVSGGLCHLGRCVNTEGSFQCVCNAGFELSPDGKNCV. The region spanning 531–571 is the EGF-like 6; calcium-binding domain; the sequence is DHNECATSTMCVNGVCLNEDGSFSCLCKPGFLLAPGGHYCM. The EGF-like 7; calcium-binding domain maps to 572 to 612; the sequence is DIDECQTPGICVNGHCTNTEGSFRCQCLGGLAVGTDGRVCV. In terms of domain architecture, TB 3 spans 618 to 670; the sequence is STCYGAIEKGSCARPFPGTVTKSECCCANPDHGFGEPCQLCPAKDSAEFQALC. Positions 682-723 constitute an EGF-like 8; calcium-binding domain; sequence DINECALDPEVCANGVCENLRGSYRCVCNLGYEAGASGKDCT. Disulfide bonds link cysteine 686–cysteine 698, cysteine 693–cysteine 707, cysteine 709–cysteine 722, cysteine 728–cysteine 740, cysteine 735–cysteine 749, cysteine 751–cysteine 764, cysteine 770–cysteine 780, cysteine 775–cysteine 789, and cysteine 791–cysteine 804. In terms of domain architecture, EGF-like 9; calcium-binding spans 724 to 765; sequence DVDECALNSLLCDNGWCQNSPGSYSCSCPPGFHFWQDTEICK. Residues 766–805 enclose the EGF-like 10; calcium-binding domain; the sequence is DVDECLSSPCVSGVCRNLAGSYTCKCGPGSRLDPSGTFCL. Positions 810–861 constitute a TB 4 domain; sequence GTCWLKIQESRCEVNLQGASLRSECCATLGAAWGSPCERCEIDPACARGFAR. Residues 869 to 910 enclose the EGF-like 11; calcium-binding domain; sequence DVNECESFPGVCPNGRCVNTAGSFRCECPEGLMLDASGRLCV. 3 disulfides stabilise this stretch: cysteine 873-cysteine 885, cysteine 880-cysteine 894, and cysteine 896-cysteine 909. One can recognise a TB 5 domain in the interval 915–966; sequence EPCFLRWDEDECGVTLPGKYRMDVCCCSIGAVWGVECEACPDPESLEFASLC. Positions 986 to 1027 constitute an EGF-like 12; calcium-binding domain; the sequence is DVNECKVFPGLCTHGTCRNTVGSFHCACAGGFALDAQERNCT. 36 disulfides stabilise this stretch: cysteine 990–cysteine 1002, cysteine 997–cysteine 1011, cysteine 1013–cysteine 1026, cysteine 1032–cysteine 1044, cysteine 1039–cysteine 1053, cysteine 1055–cysteine 1069, cysteine 1075–cysteine 1087, cysteine 1082–cysteine 1096, cysteine 1098–cysteine 1111, cysteine 1117–cysteine 1129, cysteine 1124–cysteine 1138, cysteine 1140–cysteine 1153, cysteine 1159–cysteine 1170, cysteine 1166–cysteine 1179, cysteine 1181–cysteine 1194, cysteine 1200–cysteine 1212, cysteine 1207–cysteine 1221, cysteine 1223–cysteine 1236, cysteine 1242–cysteine 1254, cysteine 1249–cysteine 1263, cysteine 1265–cysteine 1278, cysteine 1284–cysteine 1297, cysteine 1291–cysteine 1306, cysteine 1308–cysteine 1319, cysteine 1325–cysteine 1338, cysteine 1332–cysteine 1347, cysteine 1349–cysteine 1360, cysteine 1366–cysteine 1378, cysteine 1373–cysteine 1387, cysteine 1389–cysteine 1402, cysteine 1408–cysteine 1419, cysteine 1414–cysteine 1428, cysteine 1430–cysteine 1443, cysteine 1449–cysteine 1460, cysteine 1455–cysteine 1469, and cysteine 1471–cysteine 1484. N-linked (GlcNAc...) asparagine glycosylation occurs at asparagine 1025. Residues 1028–1070 form the EGF-like 13; calcium-binding domain; it reads DIDECRISPDLCGQGTCVNTPGSFECECFPGYESGFMLMKNCM. An EGF-like 14; calcium-binding domain is found at 1071–1112; sequence DVDECARDPLLCRGGTCTNTDGSYKCQCPPGHELTAKGTACE. Positions 1113–1154 constitute an EGF-like 15; calcium-binding domain; the sequence is DIDECSLSDGLCPHGQCVNVIGAFQCSCHAGFQSTPDRQGCV. Positions 1155–1195 constitute an EGF-like 16; calcium-binding domain; sequence DINECRVQNGGCDVHCINTEGSYRCSCGQGYSLMPDGRACA. Residues 1196-1237 enclose the EGF-like 17 domain; it reads DVDECEENPRVCDQGHCTNMPGGHRCLCYDGFMATPDMRTCV. Residues 1238–1279 enclose the EGF-like 18; calcium-binding domain; that stretch reads DVDECDLNPHICLHGDCENTKGSFVCHCQLGYMVRKGATGCS. Positions 1280–1320 constitute an EGF-like 19; calcium-binding domain; that stretch reads DVDECEVGGHNCDSHASCLNIPGSFSCRCLPGWVGDGFECH. The 41-residue stretch at 1321–1361 folds into the EGF-like 20; calcium-binding domain; it reads DLDECVSQEHRCSPRGDCLNVPGSYRCTCRQGFAGDGFFCE. The EGF-like 21; calcium-binding domain maps to 1362 to 1403; sequence DRDECAENVDLCDNGQCLNAPGGYRCECEMGFDPTEDHRACQ. The region spanning 1404 to 1444 is the EGF-like 22; calcium-binding domain; it reads DVDECAQGNLCAFGSCENLPGMFRCICNGGYELDRGGGNCT. Asparagine 1442 carries N-linked (GlcNAc...) asparagine glycosylation. An EGF-like 23; calcium-binding domain is found at 1445–1485; sequence DINECADPVNCINGVCINTPGSYLCSCPQDFELNPSGVGCV. Residues 1490–1546 form the TB 6 domain; that stretch reads GNCFLETHDRGDSGISCSAEIGVGVTRASCCCSLGRAWGNPCELCPMANTTEYRTLC. The N-linked (GlcNAc...) asparagine glycan is linked to asparagine 1538. The EGF-like 24; calcium-binding domain occupies 1563–1604; the sequence is DIDECQELPGLCQGGDCVNTFGSFQCECPPGYHLSEHTRICE. 6 disulfides stabilise this stretch: cysteine 1567/cysteine 1579, cysteine 1574/cysteine 1588, cysteine 1590/cysteine 1603, cysteine 1609/cysteine 1621, cysteine 1616/cysteine 1630, and cysteine 1632/cysteine 1645. The EGF-like 25; calcium-binding domain maps to 1605 to 1646; it reads DIDECSTHSGICGPGTCYNTLGNYTCVCPAEYLQVNGGNNCM. Asparagine 1627 is a glycosylation site (N-linked (GlcNAc...) asparagine). One can recognise a TB 7 domain in the interval 1651–1703; that stretch reads SVCFRHYNGTCQNELAFNVTRKMCCCSYNIGQAWNRPCEACPTPISPDYQILC. Asparagine 1658 and asparagine 1668 each carry an N-linked (GlcNAc...) asparagine glycan. The EGF-like 26; calcium-binding domain maps to 1721 to 1762; the sequence is DIDECGEIPAICANGICINQIGSFRCECPAGFNYNSILLACE. Disulfide bonds link cysteine 1725-cysteine 1737, cysteine 1732-cysteine 1746, cysteine 1748-cysteine 1761, cysteine 1767-cysteine 1780, cysteine 1774-cysteine 1789, cysteine 1791-cysteine 1803, cysteine 1809-cysteine 1821, cysteine 1816-cysteine 1830, cysteine 1832-cysteine 1845, cysteine 1851-cysteine 1861, cysteine 1856-cysteine 1870, cysteine 1872-cysteine 1884, cysteine 1890-cysteine 1903, cysteine 1898-cysteine 1912, cysteine 1914-cysteine 1927, cysteine 1933-cysteine 1945, cysteine 1940-cysteine 1954, cysteine 1956-cysteine 1967, cysteine 1973-cysteine 1985, cysteine 1980-cysteine 1994, and cysteine 1996-cysteine 2009. The EGF-like 27; calcium-binding domain occupies 1763–1804; that stretch reads DVDECGSRESPCQQNADCINIPGSYRCKCTRGYKLSPGGACV. Residues 1805 to 1846 enclose the EGF-like 28 domain; sequence GRNECREIPNVCSHGDCMDTEGSYMCLCHRGFQASADQTLCM. The EGF-like 29; calcium-binding domain occupies 1847–1885; the sequence is DIDECDRQPCGNGTCKNIIGSYNCLCFPGFVVTHNGDCV. A glycan (N-linked (GlcNAc...) asparagine) is linked at asparagine 1858. The region spanning 1886 to 1928 is the EGF-like 30; calcium-binding domain; that stretch reads DFDECTTLVGQVCRFGHCLNTAGSFHCLCQDGFELTADGKNCV. The EGF-like 31; calcium-binding domain occupies 1929 to 1968; it reads DTNECLSLAGTCLPGTCQNLEGSFRCICPPGFQVQSDHCI. Residues 1969–2010 enclose the EGF-like 32; calcium-binding domain; the sequence is DIDECSEEPNLCLFGTCTNSPGSFQCLCPPGFVLSDNGHRCF. The TB 8 domain occupies 2015–2068; that stretch reads SFCFTRFEAGKCSVPKAFNTTKTRCCCSKRPGEGWGDPCELCPQEGSAAFQELC. Asparagine 2033 carries N-linked (GlcNAc...) asparagine glycosylation. Residues 2084 to 2125 form the EGF-like 33; calcium-binding domain; that stretch reads DVNECAENPGVCTNGVCVNTDGSFRCECPFGYSLDFTGINCV. 15 disulfides stabilise this stretch: cysteine 2088–cysteine 2100, cysteine 2095–cysteine 2109, cysteine 2111–cysteine 2124, cysteine 2130–cysteine 2141, cysteine 2136–cysteine 2150, cysteine 2152–cysteine 2164, cysteine 2170–cysteine 2181, cysteine 2177–cysteine 2190, cysteine 2192–cysteine 2205, cysteine 2211–cysteine 2225, cysteine 2218–cysteine 2234, cysteine 2236–cysteine 2250, cysteine 2256–cysteine 2268, cysteine 2263–cysteine 2277, and cysteine 2279–cysteine 2292. In terms of domain architecture, EGF-like 34; calcium-binding spans 2126–2165; that stretch reads DTDECSVGHPCGQGTCTNVIGGFECACADGFEPGLMMTCE. The region spanning 2166-2206 is the EGF-like 35; calcium-binding domain; it reads DIDECSLNPLLCAFRCHNTEGSYLCTCPAGYTLREDGAMCR. The region spanning 2207–2251 is the EGF-like 36; calcium-binding domain; the sequence is DVDECADGQQDCHARGMECKNLIGTFACVCPPGMRPLPGSGEGCT. The 42-residue stretch at 2252-2293 folds into the EGF-like 37; calcium-binding domain; it reads DDNECHAQPDLCVNGRCVNTAGSFRCDCDEGFQPSPTLTECH. The TB 9 domain maps to 2298-2351; the sequence is GPCFAEVLQTMCRSLSSSSEAVTRAECCCGGGRGWGPRCELCPLPGTSAYRKLC. The region spanning 2363-2404 is the EGF-like 38; calcium-binding domain; the sequence is DVDECRMLAHLCAHGECINSLGSFRCHCQAGYTPDATATTCL. 21 cysteine pairs are disulfide-bonded: cysteine 2367-cysteine 2379, cysteine 2374-cysteine 2388, cysteine 2390-cysteine 2403, cysteine 2409-cysteine 2420, cysteine 2416-cysteine 2429, cysteine 2431-cysteine 2444, cysteine 2450-cysteine 2461, cysteine 2457-cysteine 2470, cysteine 2472-cysteine 2483, cysteine 2489-cysteine 2502, cysteine 2496-cysteine 2511, cysteine 2513-cysteine 2526, cysteine 2532-cysteine 2542, cysteine 2538-cysteine 2551, cysteine 2553-cysteine 2566, cysteine 2572-cysteine 2584, cysteine 2579-cysteine 2593, cysteine 2595-cysteine 2608, cysteine 2614-cysteine 2625, cysteine 2621-cysteine 2634, and cysteine 2636-cysteine 2648. Positions 2405-2445 constitute an EGF-like 39; calcium-binding domain; sequence DMDECSQVPKPCTFLCKNTKGSFLCSCPRGYLLEEDGRTCK. The region spanning 2446–2484 is the EGF-like 40; calcium-binding domain; it reads DLDECTSRQHNCQFLCVNTVGAFTCRCPPGFTQHHQACF. An EGF-like 41; calcium-binding domain is found at 2485–2527; the sequence is DNDECSAQPGPCGAHGHCHNTPGSFRCECHQGFTLVSSGHGCE. One can recognise an EGF-like 42; calcium-binding domain in the interval 2528–2567; the sequence is DVNECDGPHRCQHGCQNQLGGYRCSCPQGFTQHSQWAQCV. Positions 2568 to 2609 constitute an EGF-like 43; calcium-binding domain; that stretch reads DENECALSPPTCGSASCRNTLGGFRCVCPSGFDFDQALGGCQ. The region spanning 2610 to 2649 is the EGF-like 44; calcium-binding domain; it reads EVDECAGRRGPCSYSCANTPGGFLCGCPQGYFRAGQGHCV. The N-linked (GlcNAc...) asparagine glycan is linked to asparagine 2713.

The protein belongs to the fibrillin family. In terms of processing, probably forms intermolecular disulfide bonds either with other FBN3 molecules or with other components of the microfibrils. In terms of tissue distribution, predominantly expressed in connective tissues such as skeletal muscle, tendon, skin, perichondrium and periosteum. Highly expressed in fetal lung, brain, kidney. Expressed at low level in prostate, testis, mammary gland, uterus, ovary, placenta, bladder, adrenal gland, thyroid, fetal thymus, fetal liver, liver, fetal heart and heart.

It localises to the secreted. The protein resides in the extracellular space. The protein localises to the extracellular matrix. Its function is as follows. Fibrillins are structural components of 10-12 nm extracellular calcium-binding microfibrils, which occur either in association with elastin or in elastin-free bundles. Fibrillin-containing microfibrils provide long-term force bearing structural support. The polypeptide is Fibrillin-3 (FBN3) (Homo sapiens (Human)).